Here is a 281-residue protein sequence, read N- to C-terminus: 3-methyl-2-oxobutanoate hydroxymethyltransferase (281 aa).

A disordered region spans residues 1 to 20; sequence MSEQTIYGANTPGGSGPRTK. Mg(2+) is bound by residues D62 and D101. 3-methyl-2-oxobutanoate is bound by residues 62–63, D101, and K131; that span reads DS. Residue E133 participates in Mg(2+) binding. E199 acts as the Proton acceptor in catalysis.

Belongs to the PanB family. Homodecamer; pentamer of dimers. It depends on Mg(2+) as a cofactor.

It localises to the cytoplasm. It catalyses the reaction 3-methyl-2-oxobutanoate + (6R)-5,10-methylene-5,6,7,8-tetrahydrofolate + H2O = 2-dehydropantoate + (6S)-5,6,7,8-tetrahydrofolate. It functions in the pathway cofactor biosynthesis; (R)-pantothenate biosynthesis; (R)-pantoate from 3-methyl-2-oxobutanoate: step 1/2. In terms of biological role, catalyzes the reversible reaction in which hydroxymethyl group from 5,10-methylenetetrahydrofolate is transferred onto alpha-ketoisovalerate to form ketopantoate. The chain is 3-methyl-2-oxobutanoate hydroxymethyltransferase from Mycobacterium bovis (strain ATCC BAA-935 / AF2122/97).